A 109-amino-acid chain; its full sequence is Parvalbumin, muscle (109 aa).

Position 1 is an N-acetylalanine (A1). EF-hand domains are found at residues 38–73 and 77–109; these read KSPE…FTPD and LSDK…VAES. Positions 51, 53, 55, 62, 90, 92, 94, 96, and 101 each coordinate Ca(2+).

The protein belongs to the parvalbumin family.

Functionally, in muscle, parvalbumin is thought to be involved in relaxation after contraction. It binds two calcium ions. This chain is Parvalbumin, muscle, found in Gallus gallus (Chicken).